The primary structure comprises 587 residues: MARKFGRRFRRNSRASLPSLKFLTLGSTDSVFGPHNQQHREEEANAPQEIALKPVEENVQTLLGSEGDVECRAPPQQQDYAPTWKCVAIMIALCLAVLCMALDNTILATAIPKITEEFNSVHDMGWYVSAYMLAQSSMTLVYGKLLTYYTVKWVYIAALLLFEGGSLICGVSPNSIALIIGRAISGTGGSGILVSSFLIVTIIVPVEKRPLYNGILSSLYAISGVFGPLLGGAFTDYATWRWCFYINLPVGGVTGFFILLLFRADKPTKQWPTGAVSQLLELDIIGLFLFIPALVSLLLVLQWGGSKYPWDDAHIIALIAVFGVTILAFAAVEYWQQDRATIPPSMIRNRDIWGSLLFTFCLSGSVIIFNYYLPIWFQSIKNASATMSGVMNIPLILAVALTSILSGWAVTTLGYYIPFMYATPVIASVGAGLLSTFKVSSAHPAWIGFQILYGIGVGLGFGLPLVVVQATLTAHTISSGTALVTLTQGLAGALFNFVAQSVFQTKLVQALFAEAPSLDAGKIAEAGATVVRDIVDPDMVPAVLRAYNYAITRVYLVGAALAAAALLGVVPIRWGSVKGKKIEAGAA.

Helical transmembrane passes span 87–107 (VAIM…NTIL), 124–146 (MGWY…GKLL), 153–173 (WVYI…GVSP), 184–204 (ISGT…TIIV), 214–234 (GILS…GGAF), 242–262 (WCFY…LLLF), 284–304 (IIGL…LQWG), 315–335 (IIAL…VEYW), and 357–377 (LFTF…PIWF). A glycan (N-linked (GlcNAc...) asparagine) is linked at Asn-382. The next 5 membrane-spanning stretches (helical) occupy residues 393-413 (IPLI…VTTL), 414-434 (GYYI…AGLL), 447-467 (IGFQ…PLVV), 483-503 (LVTL…QSVF), and 554-574 (VYLV…PIRW).

This sequence belongs to the major facilitator superfamily. TCR/Tet family.

It is found in the membrane. Its function is as follows. MFS-type transporter; part of the gene cluster that mediates the biosynthesis of oxepinamides, derivatives of anthranilyl-containing tripeptides that share an oxepin ring and a fused pyrimidinone moiety. This Aspergillus ustus protein is MFS-type transporter opaD.